A 441-amino-acid polypeptide reads, in one-letter code: 3'-N-debenzoyl-2'-deoxytaxol N-benzoyltransferase (441 aa).

Residues His163 and Asp373 each act as proton acceptor in the active site.

It belongs to the plant acyltransferase family.

The enzyme catalyses 3'-N-debenzoyltaxol + benzoyl-CoA = paclitaxel + CoA + H(+). It participates in alkaloid biosynthesis; taxol biosynthesis. Catalyzes the stereoselective coupling of the surrogate substrate N-debenzoyl-(3'RS)-2'-deoxytaxol with benzoyl-CoA to form predominantly one 3'-epimer of 2'-deoxytaxol. This enzymatic reaction constitutes the final acylation in the taxol biosynthetic pathway. The chain is 3'-N-debenzoyl-2'-deoxytaxol N-benzoyltransferase from Taxus canadensis (Canadian yew).